A 133-amino-acid polypeptide reads, in one-letter code: FPRL1 inhibitory protein (133 aa).

The signal sequence occupies residues 1 to 28; the sequence is MKKNITKTIIASTVIAAGLLTQTNDAKA.

It belongs to the CHIPS/FLIPr family.

It localises to the secreted. May be involved in countering the first line of host defense mechanisms. Impairs the leukocyte response to FPRL1 agonists by binding directly to host FPRL1. The protein is FPRL1 inhibitory protein (flr) of Staphylococcus aureus (strain USA300).